Reading from the N-terminus, the 329-residue chain is Beta-ketoacyl-[acyl-carrier-protein] synthase III (329 aa).

Active-site residues include C123 and H256. The segment at 257-261 (QANIR) is ACP-binding. N286 is a catalytic residue.

It belongs to the thiolase-like superfamily. FabH family. In terms of assembly, homodimer.

It localises to the cytoplasm. The enzyme catalyses malonyl-[ACP] + acetyl-CoA + H(+) = 3-oxobutanoyl-[ACP] + CO2 + CoA. Its pathway is lipid metabolism; fatty acid biosynthesis. Functionally, catalyzes the condensation reaction of fatty acid synthesis by the addition to an acyl acceptor of two carbons from malonyl-ACP. Catalyzes the first condensation reaction which initiates fatty acid synthesis and may therefore play a role in governing the total rate of fatty acid production. Possesses both acetoacetyl-ACP synthase and acetyl transacylase activities. Its substrate specificity determines the biosynthesis of branched-chain and/or straight-chain of fatty acids. This chain is Beta-ketoacyl-[acyl-carrier-protein] synthase III, found in Burkholderia thailandensis (strain ATCC 700388 / DSM 13276 / CCUG 48851 / CIP 106301 / E264).